We begin with the raw amino-acid sequence, 648 residues long: Macrolide export ATP-binding/permease protein MacB (648 aa).

Residues Leu5 to Thr243 enclose the ABC transporter domain. Gly41–Ser48 contributes to the ATP binding site. The next 4 helical transmembrane spans lie at Leu273 to Gly293, Leu523 to Ile543, Ala576 to Phe596, and Pro611 to Leu631.

This sequence belongs to the ABC transporter superfamily. Macrolide exporter (TC 3.A.1.122) family. In terms of assembly, homodimer. Part of the tripartite efflux system MacAB-TolC, which is composed of an inner membrane transporter, MacB, a periplasmic membrane fusion protein, MacA, and an outer membrane component, TolC. The complex forms a large protein conduit and can translocate molecules across both the inner and outer membranes. Interacts with MacA.

It localises to the cell inner membrane. Functionally, part of the tripartite efflux system MacAB-TolC. MacB is a non-canonical ABC transporter that contains transmembrane domains (TMD), which form a pore in the inner membrane, and an ATP-binding domain (NBD), which is responsible for energy generation. Confers resistance against macrolides. The chain is Macrolide export ATP-binding/permease protein MacB from Escherichia coli (strain UTI89 / UPEC).